Reading from the N-terminus, the 319-residue chain is RWD domain-containing protein 2B (319 aa).

The RWD domain occupies 41 to 165; that stretch reads SELDLLASMF…EWVREHASGY (125 aa). At S275 the chain carries Phosphoserine.

In Pongo abelii (Sumatran orangutan), this protein is RWD domain-containing protein 2B (RWDD2B).